A 796-amino-acid polypeptide reads, in one-letter code: Inactive dipeptidyl peptidase 10 (796 aa).

Residues 1 to 34 (MNQTASVSHHIKCQPSKTIKELGSNSPPQRNWKG) are Cytoplasmic-facing. A mediates effects on KCND2 region spans residues 1 to 55 (MNQTASVSHHIKCQPSKTIKELGSNSPPQRNWKGIAIALLVILVVCSLITMSVIL). Residues 35–55 (IAIALLVILVVCSLITMSVIL) form a helical; Signal-anchor for type II membrane protein membrane-spanning segment. Topologically, residues 56 to 796 (LTPDELTNSS…VLPQEPEEDE (741 aa)) are extracellular. 4 N-linked (GlcNAc...) asparagine glycosylation sites follow: asparagine 63, asparagine 90, asparagine 111, and asparagine 119. 2 positions are modified to phosphotyrosine: tyrosine 138 and tyrosine 143. Residues asparagine 257, asparagine 342, and asparagine 748 are each glycosylated (N-linked (GlcNAc...) asparagine).

It belongs to the peptidase S9B family. DPPIV subfamily. In terms of assembly, may form oligomers. Interacts with KCND1. Interacts with KCND2. Identified in a complex with KCND2 and KCNIP3. Post-translationally, N-glycosylation is important for cell surface expression, specially at Asn-257, which is crucial. In terms of tissue distribution, detected in brain cortex, hippocampus, thalamus and cerebellum Purkinje cells (at protein level).

It localises to the cell membrane. In terms of biological role, promotes cell surface expression of the potassium channel KCND2. Modulates the activity and gating characteristics of the potassium channel KCND2. Has no dipeptidyl aminopeptidase activity. This chain is Inactive dipeptidyl peptidase 10 (Dpp10), found in Rattus norvegicus (Rat).